Here is a 545-residue protein sequence, read N- to C-terminus: Membrane protein insertase YidC (545 aa).

Residues 6 to 26 (FVLFVFFIFLSFLLWEQWQID) traverse the membrane as a helical segment. Positions 32-69 (QAVAQTDGASRPAGDLPQRPSDDESDVTVHTEAPTQEG) are disordered. Transmembrane regions (helical) follow at residues 354–374 (FFNNWGWAIIFVTLVIKALFF), 425–445 (GGCLPILVQIPVFISLYWVLV), 462–482 (LSSKDPYFVLPLIMGVSMFIQ), and 500–520 (FFPLVFTVFFLFFPSGLVLYW).

Belongs to the OXA1/ALB3/YidC family. Type 1 subfamily. Interacts with the Sec translocase complex via SecD. Specifically interacts with transmembrane segments of nascent integral membrane proteins during membrane integration.

It localises to the cell inner membrane. Required for the insertion and/or proper folding and/or complex formation of integral membrane proteins into the membrane. Involved in integration of membrane proteins that insert both dependently and independently of the Sec translocase complex, as well as at least some lipoproteins. Aids folding of multispanning membrane proteins. The polypeptide is Membrane protein insertase YidC (Methylococcus capsulatus (strain ATCC 33009 / NCIMB 11132 / Bath)).